A 123-amino-acid polypeptide reads, in one-letter code: UPF0212 protein rrnAC0441 (123 aa).

This sequence belongs to the UPF0212 family.

The protein is UPF0212 protein rrnAC0441 of Haloarcula marismortui (strain ATCC 43049 / DSM 3752 / JCM 8966 / VKM B-1809) (Halobacterium marismortui).